The primary structure comprises 683 residues: Multidrug resistance protein MdtO (683 aa).

Helical transmembrane passes span 43-63 (VILI…AVLF), 75-95 (FVAI…FLIY), 100-120 (GEPL…MFLM), 125-145 (LGLV…FPAM), 158-178 (WCIV…VLWF), 402-422 (FGGA…VMPW), 426-446 (IVEL…IATS), 457-477 (MVVT…YDLV), and 483-503 (ALGI…VWPE).

It belongs to the MdtO family. In terms of assembly, could be part of a tripartite efflux system composed of MdtN, MdtO and MdtP.

Its subcellular location is the cell inner membrane. Its function is as follows. Could be involved in resistance to puromycin, acriflavine and tetraphenylarsonium chloride. The polypeptide is Multidrug resistance protein MdtO (mdtO) (Escherichia coli (strain K12)).